A 462-amino-acid polypeptide reads, in one-letter code: Argininosuccinate lyase (462 aa).

Belongs to the lyase 1 family. Argininosuccinate lyase subfamily.

Its subcellular location is the cytoplasm. The enzyme catalyses 2-(N(omega)-L-arginino)succinate = fumarate + L-arginine. Its pathway is amino-acid biosynthesis; L-arginine biosynthesis; L-arginine from L-ornithine and carbamoyl phosphate: step 3/3. The sequence is that of Argininosuccinate lyase from Hydrogenovibrio crunogenus (strain DSM 25203 / XCL-2) (Thiomicrospira crunogena).